The chain runs to 158 residues: NAD(P)H-quinone oxidoreductase subunit J, chloroplastic (158 aa).

This sequence belongs to the complex I 30 kDa subunit family. In terms of assembly, NDH is composed of at least 16 different subunits, 5 of which are encoded in the nucleus.

It is found in the plastid. Its subcellular location is the chloroplast thylakoid membrane. It carries out the reaction a plastoquinone + NADH + (n+1) H(+)(in) = a plastoquinol + NAD(+) + n H(+)(out). The catalysed reaction is a plastoquinone + NADPH + (n+1) H(+)(in) = a plastoquinol + NADP(+) + n H(+)(out). Functionally, NDH shuttles electrons from NAD(P)H:plastoquinone, via FMN and iron-sulfur (Fe-S) centers, to quinones in the photosynthetic chain and possibly in a chloroplast respiratory chain. The immediate electron acceptor for the enzyme in this species is believed to be plastoquinone. Couples the redox reaction to proton translocation, and thus conserves the redox energy in a proton gradient. This Lotus japonicus (Lotus corniculatus var. japonicus) protein is NAD(P)H-quinone oxidoreductase subunit J, chloroplastic.